A 629-amino-acid chain; its full sequence is tRNA uridine 5-carboxymethylaminomethyl modification enzyme MnmG (629 aa).

Position 13–18 (Gly13–Gly18) interacts with FAD. Gly273–Phe287 is a binding site for NAD(+).

It belongs to the MnmG family. In terms of assembly, homodimer. Heterotetramer of two MnmE and two MnmG subunits. The cofactor is FAD.

It is found in the cytoplasm. Its function is as follows. NAD-binding protein involved in the addition of a carboxymethylaminomethyl (cmnm) group at the wobble position (U34) of certain tRNAs, forming tRNA-cmnm(5)s(2)U34. This is tRNA uridine 5-carboxymethylaminomethyl modification enzyme MnmG from Shewanella baltica (strain OS223).